Here is a 70-residue protein sequence, read N- to C-terminus: Protein SlyX homolog (70 aa).

It belongs to the SlyX family.

The polypeptide is Protein SlyX homolog (Shewanella oneidensis (strain ATCC 700550 / JCM 31522 / CIP 106686 / LMG 19005 / NCIMB 14063 / MR-1)).